Consider the following 116-residue polypeptide: Phosphoribosyl-AMP cyclohydrolase (116 aa).

D80 serves as a coordination point for Mg(2+). C81 serves as a coordination point for Zn(2+). Residues D82 and D84 each coordinate Mg(2+). 2 residues coordinate Zn(2+): C98 and C105.

This sequence belongs to the PRA-CH family. In terms of assembly, homodimer. Requires Mg(2+) as cofactor. It depends on Zn(2+) as a cofactor.

The protein localises to the cytoplasm. It carries out the reaction 1-(5-phospho-beta-D-ribosyl)-5'-AMP + H2O = 1-(5-phospho-beta-D-ribosyl)-5-[(5-phospho-beta-D-ribosylamino)methylideneamino]imidazole-4-carboxamide. It participates in amino-acid biosynthesis; L-histidine biosynthesis; L-histidine from 5-phospho-alpha-D-ribose 1-diphosphate: step 3/9. Its function is as follows. Catalyzes the hydrolysis of the adenine ring of phosphoribosyl-AMP. The sequence is that of Phosphoribosyl-AMP cyclohydrolase from Trichormus variabilis (strain ATCC 29413 / PCC 7937) (Anabaena variabilis).